The primary structure comprises 96 residues: Probable quinol oxidase subunit 4 (96 aa).

3 helical membrane-spanning segments follow: residues 8 to 28, 36 to 56, and 68 to 88; these read TVGFIASIVLTILAVFVTLYT, ITIIFGFAFIQAAVQLLMFMH, and FKVLFAIIITLITVIGTYWVM.

This sequence belongs to the cytochrome c oxidase bacterial subunit 4 family.

It is found in the cell membrane. It carries out the reaction 2 a quinol + O2 = 2 a quinone + 2 H2O. Functionally, catalyzes quinol oxidation with the concomitant reduction of oxygen to water. The protein is Probable quinol oxidase subunit 4 (qoxD) of Staphylococcus saprophyticus subsp. saprophyticus (strain ATCC 15305 / DSM 20229 / NCIMB 8711 / NCTC 7292 / S-41).